A 102-amino-acid polypeptide reads, in one-letter code: Mini zinc finger protein 1 (102 aa).

Residues 1-13 are compositionally biased toward basic residues; that stretch reads MMKKRQMVIKQRS. Residues 1 to 34 form a disordered region; it reads MMKKRQMVIKQRSRNSNTSSSWTTTSSSSSSSEI. Residues 14–32 are compositionally biased toward low complexity; sequence RNSNTSSSWTTTSSSSSSS. Residues 39–88 form a ZF-HD dimerization-type; degenerate zinc finger; it reads YVECQKNHAANIGGYAVDGCREFMAAGVEGTVDALRCAACGCHRNFHRKE.

Homo- and heterodimers. Interacts with ZHD1, ZHD5, ZHD6, ZHD7, ZHD8, ZHD10 and ZHD13. As to expression, mostly expressed in roots and stems, present in siliques and seedlings, and weakly observed in petioles, leaves and flowers.

Its subcellular location is the cytoplasm. In terms of biological role, inhibits zinc finger homeodomain (ZHD) transcription factors, such as ZHD5, by interacting with them to prevent both their nuclear localization and their DNA-binding properties. Involved in integrating signals from multiple hormones by preventing the expression of genes involved in gibberellic acid (GA), auxin and brassinosteroid signaling and by promoting the expression of abscisic acid (ABA)-responsive genes. Regulates several development aspects, including photomorphogenesis, apical dominance, longevity, flower morphology and fertility, as well as root and stem elongation. Promotes the formation of ectopic shoot meristems on leaf margins. The polypeptide is Mini zinc finger protein 1 (MIF1) (Arabidopsis thaliana (Mouse-ear cress)).